A 145-amino-acid chain; its full sequence is Neuromedin-S (145 aa).

Positions 1 to 25 (MKYLAQFPSILAIYCFCLLQIPSSG) are cleaved as a signal peptide. 3 consecutive propeptides follow at residues 26 to 64 (FPRPLADASDGLDIVKFEQMAYWASLSRQPKDNQDIYKR), 65 to 100 (FLFHYSRTQEPAHPVKTGFPPVHPLMRLAAKLADRR), and 101 to 103 (MKT). The residue at position 136 (Asn-136) is an Asparagine amide. The propeptide occupies 139–145 (NLDFDTW).

The protein belongs to the NmU family.

The protein localises to the secreted. In terms of biological role, implicated in the regulation of circadian rhythms through autocrine and/or paracrine actions. The polypeptide is Neuromedin-S (NMS) (Bos taurus (Bovine)).